The sequence spans 377 residues: UPF0754 membrane protein LMOf2365_2257 (377 aa).

2 helical membrane-spanning segments follow: residues 1–21 (MSVLFTILLMAVIGGFIGAMT) and 357–377 (YLGGILGGFIGIIQGVLAMWI).

This sequence belongs to the UPF0754 family.

The protein localises to the cell membrane. This chain is UPF0754 membrane protein LMOf2365_2257, found in Listeria monocytogenes serotype 4b (strain F2365).